The primary structure comprises 420 residues: Tryptophan--tRNA ligase (420 aa).

The short motif at 72–80 (PSGLPHFGH) is the 'HIGH' region element. Positions 308–312 (KMSSS) match the 'KMSKS' region motif.

Belongs to the class-I aminoacyl-tRNA synthetase family.

The protein localises to the cytoplasm. The catalysed reaction is tRNA(Trp) + L-tryptophan + ATP = L-tryptophyl-tRNA(Trp) + AMP + diphosphate + H(+). The sequence is that of Tryptophan--tRNA ligase from Archaeoglobus fulgidus (strain ATCC 49558 / DSM 4304 / JCM 9628 / NBRC 100126 / VC-16).